A 398-amino-acid polypeptide reads, in one-letter code: ORC1-type DNA replication protein 1 (398 aa).

Residues Thr-67–Ala-71, Tyr-208, and Arg-220 each bind ATP.

Belongs to the CDC6/cdc18 family.

In terms of biological role, involved in regulation of DNA replication. The protein is ORC1-type DNA replication protein 1 (cdc6-1) of Sulfurisphaera tokodaii (strain DSM 16993 / JCM 10545 / NBRC 100140 / 7) (Sulfolobus tokodaii).